Consider the following 478-residue polypeptide: ATP synthase subunit beta (478 aa).

G164–T171 is an ATP binding site.

The protein belongs to the ATPase alpha/beta chains family. As to quaternary structure, F-type ATPases have 2 components, CF(1) - the catalytic core - and CF(0) - the membrane proton channel. CF(1) has five subunits: alpha(3), beta(3), gamma(1), delta(1), epsilon(1). CF(0) has three main subunits: a(1), b(2) and c(9-12). The alpha and beta chains form an alternating ring which encloses part of the gamma chain. CF(1) is attached to CF(0) by a central stalk formed by the gamma and epsilon chains, while a peripheral stalk is formed by the delta and b chains.

It is found in the cell membrane. It carries out the reaction ATP + H2O + 4 H(+)(in) = ADP + phosphate + 5 H(+)(out). Its function is as follows. Produces ATP from ADP in the presence of a proton gradient across the membrane. The catalytic sites are hosted primarily by the beta subunits. This is ATP synthase subunit beta from Corynebacterium kroppenstedtii (strain DSM 44385 / JCM 11950 / CIP 105744 / CCUG 35717).